The sequence spans 152 residues: Xanthine-guanine phosphoribosyltransferase (152 aa).

5-phospho-alpha-D-ribose 1-diphosphate is bound by residues 37 to 38 (RG), Arg-69, and 88 to 96 (DDLVDTGGT). Position 69 (Arg-69) interacts with GMP. Asp-89 lines the Mg(2+) pocket. 2 residues coordinate guanine: Asp-92 and Ile-135. Residues Asp-92 and Ile-135 each coordinate xanthine. Residues 92–96 (DTGGT) and 134–135 (WI) each bind GMP.

It belongs to the purine/pyrimidine phosphoribosyltransferase family. XGPT subfamily. In terms of assembly, homotetramer. Mg(2+) serves as cofactor.

Its subcellular location is the cell inner membrane. It carries out the reaction GMP + diphosphate = guanine + 5-phospho-alpha-D-ribose 1-diphosphate. The enzyme catalyses XMP + diphosphate = xanthine + 5-phospho-alpha-D-ribose 1-diphosphate. The catalysed reaction is IMP + diphosphate = hypoxanthine + 5-phospho-alpha-D-ribose 1-diphosphate. Its pathway is purine metabolism; GMP biosynthesis via salvage pathway; GMP from guanine: step 1/1. It functions in the pathway purine metabolism; XMP biosynthesis via salvage pathway; XMP from xanthine: step 1/1. Its function is as follows. Purine salvage pathway enzyme that catalyzes the transfer of the ribosyl-5-phosphate group from 5-phospho-alpha-D-ribose 1-diphosphate (PRPP) to the N9 position of the 6-oxopurines guanine and xanthine to form the corresponding ribonucleotides GMP (guanosine 5'-monophosphate) and XMP (xanthosine 5'-monophosphate), with the release of PPi. To a lesser extent, also acts on hypoxanthine. This chain is Xanthine-guanine phosphoribosyltransferase, found in Shigella boydii serotype 18 (strain CDC 3083-94 / BS512).